The following is a 241-amino-acid chain: UDP-2,3-diacylglucosamine hydrolase (241 aa).

Mn(2+)-binding residues include D8, H10, D41, N79, and H114. A substrate-binding site is contributed by 79-80 (NR). The substrate site is built by D122, K164, K167, and H195. Positions 195 and 197 each coordinate Mn(2+).

It belongs to the LpxH family. Mn(2+) serves as cofactor.

The protein localises to the cell inner membrane. It carries out the reaction UDP-2-N,3-O-bis[(3R)-3-hydroxytetradecanoyl]-alpha-D-glucosamine + H2O = 2-N,3-O-bis[(3R)-3-hydroxytetradecanoyl]-alpha-D-glucosaminyl 1-phosphate + UMP + 2 H(+). It participates in glycolipid biosynthesis; lipid IV(A) biosynthesis; lipid IV(A) from (3R)-3-hydroxytetradecanoyl-[acyl-carrier-protein] and UDP-N-acetyl-alpha-D-glucosamine: step 4/6. Functionally, hydrolyzes the pyrophosphate bond of UDP-2,3-diacylglucosamine to yield 2,3-diacylglucosamine 1-phosphate (lipid X) and UMP by catalyzing the attack of water at the alpha-P atom. Involved in the biosynthesis of lipid A, a phosphorylated glycolipid that anchors the lipopolysaccharide to the outer membrane of the cell. This chain is UDP-2,3-diacylglucosamine hydrolase, found in Aliivibrio fischeri (strain MJ11) (Vibrio fischeri).